Reading from the N-terminus, the 307-residue chain is MNSTEPDSDRVTRTDRLNAPEIADVQALARAAGDADGADPFDEHTLLRLRDPHAPTHHLTARTANGTLTGYAHLDITNPTSGTGVELAVHPAYRRRGTGRALARSVRAAVTGPLRAWAHGDHPSAAALAVDLDYRRARVLWQLRRPLTAPIPEPPLPDGVTLRAYRPGADDDAWLALNAKAFADHPEQGQWTAADLQARRDEPWFDAAGFLLAVDPAGQLLGFHWTKIHERPGSARIGEVYVLGVDPTAHGGGLGKALTAAGLAYLRDQRGLDRVMLYVDESNTAAVALYERLGFARWSAHVNYQLG.

N-acetyltransferase domains follow at residues 12 to 157 (TRTD…PPLP) and 160 to 307 (VTLR…YQLG). Glutamate 43 contacts 1D-myo-inositol 2-(L-cysteinylamino)-2-deoxy-alpha-D-glucopyranoside. 87 to 89 (LAV) provides a ligand contact to acetyl-CoA. The 1D-myo-inositol 2-(L-cysteinylamino)-2-deoxy-alpha-D-glucopyranoside site is built by glutamate 187, lysine 227, and glutamate 239. Acetyl-CoA contacts are provided by residues 243 to 245 (LGV) and 250 to 256 (HGGGLGK). A 1D-myo-inositol 2-(L-cysteinylamino)-2-deoxy-alpha-D-glucopyranoside-binding site is contributed by tyrosine 278.

Belongs to the acetyltransferase family. MshD subfamily. In terms of assembly, monomer.

It catalyses the reaction 1D-myo-inositol 2-(L-cysteinylamino)-2-deoxy-alpha-D-glucopyranoside + acetyl-CoA = mycothiol + CoA + H(+). Functionally, catalyzes the transfer of acetyl from acetyl-CoA to desacetylmycothiol (Cys-GlcN-Ins) to form mycothiol. The polypeptide is Mycothiol acetyltransferase (Salinispora tropica (strain ATCC BAA-916 / DSM 44818 / JCM 13857 / NBRC 105044 / CNB-440)).